The chain runs to 915 residues: Isoleucine--tRNA ligase (915 aa).

A 'HIGH' region motif is present at residues 64–74 (PYANGNFHVGH). Position 557 (E557) interacts with L-isoleucyl-5'-AMP. A 'KMSKS' region motif is present at residues 598 to 602 (AMSKS). Residue K601 coordinates ATP. 4 residues coordinate Zn(2+): C887, C890, C902, and C905.

The protein belongs to the class-I aminoacyl-tRNA synthetase family. IleS type 1 subfamily. As to quaternary structure, monomer. Zn(2+) serves as cofactor.

The protein resides in the cytoplasm. The catalysed reaction is tRNA(Ile) + L-isoleucine + ATP = L-isoleucyl-tRNA(Ile) + AMP + diphosphate. Its function is as follows. Catalyzes the attachment of isoleucine to tRNA(Ile). As IleRS can inadvertently accommodate and process structurally similar amino acids such as valine, to avoid such errors it has two additional distinct tRNA(Ile)-dependent editing activities. One activity is designated as 'pretransfer' editing and involves the hydrolysis of activated Val-AMP. The other activity is designated 'posttransfer' editing and involves deacylation of mischarged Val-tRNA(Ile). This is Isoleucine--tRNA ligase from Leptospira biflexa serovar Patoc (strain Patoc 1 / ATCC 23582 / Paris).